Reading from the N-terminus, the 283-residue chain is Pantothenate synthetase (283 aa).

26 to 33 is an ATP binding site; that stretch reads MGNLHEGH. Residue histidine 33 is the Proton donor of the active site. (R)-pantoate is bound at residue glutamine 57. Glutamine 57 contributes to the beta-alanine binding site. Residue 144 to 147 participates in ATP binding; sequence GKKD. Glutamine 150 provides a ligand contact to (R)-pantoate. ATP-binding positions include isoleucine 173 and 181–184; that span reads LSSR.

This sequence belongs to the pantothenate synthetase family. As to quaternary structure, homodimer.

The protein localises to the cytoplasm. It carries out the reaction (R)-pantoate + beta-alanine + ATP = (R)-pantothenate + AMP + diphosphate + H(+). Its pathway is cofactor biosynthesis; (R)-pantothenate biosynthesis; (R)-pantothenate from (R)-pantoate and beta-alanine: step 1/1. In terms of biological role, catalyzes the condensation of pantoate with beta-alanine in an ATP-dependent reaction via a pantoyl-adenylate intermediate. This Polynucleobacter necessarius subsp. necessarius (strain STIR1) protein is Pantothenate synthetase.